A 660-amino-acid chain; its full sequence is UvrABC system protein B (660 aa).

A Helicase ATP-binding domain is found at 27–414 (NGVNEGKRHQ…TDEMVQQIIR (388 aa)). 40–47 (GATGTGKT) is an ATP binding site. Residues 93–116 (YYDYYQPEAYVPSTDTFIEKDASI) carry the Beta-hairpin motif. Residues 431–593 (QIDDLLGEIQ…ITPTTINKKI (163 aa)) enclose the Helicase C-terminal domain. Positions 603-622 (NDETNEQQQTEVPKKMTKKE) are disordered. The UVR domain maps to 624-659 (EKTIANIEKEMKQAAKDLDFEKATELRDMLFELKAE).

It belongs to the UvrB family. Forms a heterotetramer with UvrA during the search for lesions. Interacts with UvrC in an incision complex.

Its subcellular location is the cytoplasm. Its function is as follows. The UvrABC repair system catalyzes the recognition and processing of DNA lesions. A damage recognition complex composed of 2 UvrA and 2 UvrB subunits scans DNA for abnormalities. Upon binding of the UvrA(2)B(2) complex to a putative damaged site, the DNA wraps around one UvrB monomer. DNA wrap is dependent on ATP binding by UvrB and probably causes local melting of the DNA helix, facilitating insertion of UvrB beta-hairpin between the DNA strands. Then UvrB probes one DNA strand for the presence of a lesion. If a lesion is found the UvrA subunits dissociate and the UvrB-DNA preincision complex is formed. This complex is subsequently bound by UvrC and the second UvrB is released. If no lesion is found, the DNA wraps around the other UvrB subunit that will check the other stand for damage. This Staphylococcus saprophyticus subsp. saprophyticus (strain ATCC 15305 / DSM 20229 / NCIMB 8711 / NCTC 7292 / S-41) protein is UvrABC system protein B.